The chain runs to 132 residues: UPF0060 membrane protein SG1469 (132 aa).

The next 3 helical transmembrane spans lie at valine 5 to tyrosine 25, leucine 32 to proline 52, and alanine 60 to isoleucine 80.

Belongs to the UPF0060 family.

The protein localises to the cell inner membrane. The sequence is that of UPF0060 membrane protein SG1469 from Sodalis glossinidius (strain morsitans).